Consider the following 417-residue polypeptide: Cobalamin binding intrinsic factor (417 aa).

The signal sequence occupies residues Met1–Thr18. Disulfide bonds link Cys26–Cys246, Cys103–Cys288, and Cys143–Cys182. Residue Asp171 participates in cob(II)alamin binding. Ser191 carries the post-translational modification Phosphoserine. Residues Asp222 and Gln270 each coordinate cob(II)alamin. Residues Asn311 and Asn330 are each glycosylated (N-linked (GlcNAc...) asparagine). Residues Ser365–Val370 and Trp386–Leu395 contribute to the cob(II)alamin site. N-linked (GlcNAc...) asparagine glycosylation occurs at Asn413.

It belongs to the eukaryotic cobalamin transport proteins family. Interacts with CUBN (via CUB domains). As to expression, gastric mucosa.

The protein resides in the secreted. Promotes absorption of the essential vitamin cobalamin (Cbl) in the ileum. After interaction with CUBN, the CBLIF-cobalamin complex is internalized via receptor-mediated endocytosis. This chain is Cobalamin binding intrinsic factor (Cblif), found in Mus musculus (Mouse).